A 97-amino-acid polypeptide reads, in one-letter code: uncharacterized protein (97 aa).

Positions 1-20 (MAKEQTDRTTLDLFAHERRP) are enriched in basic and acidic residues. The disordered stretch occupies residues 1–30 (MAKEQTDRTTLDLFAHERRPGRPKTNPLSR).

This is an uncharacterized protein from Escherichia coli O157:H7.